Here is a 266-residue protein sequence, read N- to C-terminus: Glucosamine-6-phosphate deaminase (266 aa).

D72 functions as the Proton acceptor; for enolization step in the catalytic mechanism. D141 (for ring-opening step) is an active-site residue. Catalysis depends on H143, which acts as the Proton acceptor; for ring-opening step. E148 serves as the catalytic For ring-opening step.

It belongs to the glucosamine/galactosamine-6-phosphate isomerase family. NagB subfamily. In terms of assembly, homohexamer.

It carries out the reaction alpha-D-glucosamine 6-phosphate + H2O = beta-D-fructose 6-phosphate + NH4(+). It participates in amino-sugar metabolism; N-acetylneuraminate degradation; D-fructose 6-phosphate from N-acetylneuraminate: step 5/5. With respect to regulation, allosterically activated by N-acetylglucosamine 6-phosphate (GlcNAc6P). In terms of biological role, catalyzes the reversible isomerization-deamination of glucosamine 6-phosphate (GlcN6P) to form fructose 6-phosphate (Fru6P) and ammonium ion. The chain is Glucosamine-6-phosphate deaminase from Yersinia enterocolitica serotype O:8 / biotype 1B (strain NCTC 13174 / 8081).